Reading from the N-terminus, the 472-residue chain is Methanethiol oxidase (472 aa).

Alanine 2 carries the N-acetylalanine modification. 2 positions are modified to phosphoserine: serine 111 and serine 467.

It belongs to the selenium-binding protein family. Interacts with USP33. In terms of processing, the N-terminus is blocked. In terms of tissue distribution, highly expressed in liver, kidney and, to a lesser extent, lung.

Its subcellular location is the nucleus. The protein localises to the cytoplasm. The protein resides in the cytosol. It is found in the membrane. The catalysed reaction is methanethiol + O2 + H2O = hydrogen sulfide + formaldehyde + H2O2 + H(+). The protein operates within organosulfur degradation. Functionally, catalyzes the oxidation of methanethiol, an organosulfur compound known to be produced in substantial amounts by gut bacteria. Selenium-binding protein which may be involved in the sensing of reactive xenobiotics in the cytoplasm. May be involved in intra-Golgi protein transport. This Mus musculus (Mouse) protein is Methanethiol oxidase (Selenbp1).